We begin with the raw amino-acid sequence, 375 residues long: Proclotting enzyme (375 aa).

The N-terminal stretch at M1–C21 is a signal peptide. The propeptide occupies S22–Q27. A Pyrrolidone carboxylic acid modification is found at Q30. In terms of domain architecture, Clip spans L39–C84. Intrachain disulfides connect C40-C83, C50-C73, and C56-C84. A disordered region spans residues V90–N113. 4 disulfides stabilise this stretch: C118–C248, C157–C173, C295–C311, and C322–C351. An N-linked (GlcNAc...) asparagine glycan is attached at N122. A Peptidase S1 domain is found at I128–V375. Residue H172 is the Charge relay system of the active site. E194, N196, S199, and D202 together coordinate Ca(2+). D228 functions as the Charge relay system in the catalytic mechanism. N235 and N304 each carry an N-linked (GlcNAc...) asparagine glycan. The active-site Charge relay system is S326.

This sequence belongs to the peptidase S1 family. CLIP subfamily. In the active form, heterodimer of a light chain and a heavy chain; disulfide-linked. Forms a covalent heterodimer with intracellular coagulation inhibitor 2/LICI-2. In terms of processing, proteolytically cleaved into its mature active form by serine protease factor B. Cleavage produces a 25 kDa light chain containing the CLIP domain and a catalytic 31 kDa heavy chain which remain covalently associated through an interchain disulfide bond. Proteolytically cleaved by clotting factor G subunit beta. Post-translationally, contains six O-linked carbohydrate chains in the N-terminal light chain. In terms of tissue distribution, expressed in hemocytes (at protein level).

The protein localises to the cytoplasmic vesicle. It is found in the secretory vesicle. It localises to the secreted. It carries out the reaction Selective cleavage of 18-Arg-|- and 47-Arg-|- bonds in coagulogen to form coagulin and fragments.. Its activity is regulated as follows. Inhibited by intracellular coagulation inhibitor 2/LICI-2 and to a lesser extent by intracellular coagulation inhibitor 3/LICI-3. In terms of biological role, this enzyme is closely associated with an endotoxin-sensitive hemolymph coagulation system in limulus. Its active form catalyzes the conversion of coagulogen to insoluble coagulin gel. The protein is Proclotting enzyme of Tachypleus tridentatus (Japanese horseshoe crab).